The following is a 124-amino-acid chain: Holo-[acyl-carrier-protein] synthase (124 aa).

Residues D7 and E55 each coordinate Mg(2+).

Belongs to the P-Pant transferase superfamily. AcpS family. Mg(2+) is required as a cofactor.

It is found in the cytoplasm. The catalysed reaction is apo-[ACP] + CoA = holo-[ACP] + adenosine 3',5'-bisphosphate + H(+). Functionally, transfers the 4'-phosphopantetheine moiety from coenzyme A to a Ser of acyl-carrier-protein. In Borreliella afzelii (strain PKo) (Borrelia afzelii), this protein is Holo-[acyl-carrier-protein] synthase.